Here is a 167-residue protein sequence, read N- to C-terminus: Secreted LysM effector Blys6 (167 aa).

An N-terminal signal peptide occupies residues 1-16; the sequence is MKGLCVAACTLVLAAA. Positions 109-162 constitute a LysM domain; that stretch reads KWYRIRRGDDCGPVASEFGISADQLIEWNPWLSADVDGTHYPCMNIWPTDNLCV.

The protein belongs to the secreted LysM effector family.

Might have a role in sequestration of chitin oligosaccharides (breakdown products of fungal cell walls that are released during invasion and act as triggers of host immunity) to dampen host defense. The protein is Secreted LysM effector Blys6 of Beauveria bassiana (strain ARSEF 2860) (White muscardine disease fungus).